Here is a 222-residue protein sequence, read N- to C-terminus: Small ribosomal subunit protein uS3 (222 aa).

In terms of domain architecture, KH type-2 spans 39–108; sequence IRKFIKKELF…NVLINIVEVK (70 aa).

It belongs to the universal ribosomal protein uS3 family. In terms of assembly, part of the 30S ribosomal subunit. Forms a tight complex with proteins S10 and S14.

Its function is as follows. Binds the lower part of the 30S subunit head. Binds mRNA in the 70S ribosome, positioning it for translation. The chain is Small ribosomal subunit protein uS3 from Clostridium perfringens (strain ATCC 13124 / DSM 756 / JCM 1290 / NCIMB 6125 / NCTC 8237 / Type A).